Reading from the N-terminus, the 199-residue chain is MGKKDEKSQQGEELVKVNKWDGSAVKHALDDAVKTCLLGDRPQLKEQFGLVNTRLALCALAVSVAIMAHAWDFTHPFPESRPVLLFSVLAYFALLGILTLHSSFREKGTFAVALQKDKERERLWEASSDMRKYDDKYLLTLSVRDTKNGKRREQSSNKSCAAFIDQNGIVLDNLVANEVNRLFNALAADKKNASSLSSN.

Residues 1–49 (MGKKDEKSQQGEELVKVNKWDGSAVKHALDDAVKTCLLGDRPQLKEQFG) are Cytoplasmic-facing. A helical transmembrane segment spans residues 50-72 (LVNTRLALCALAVSVAIMAHAWD). Topologically, residues 73 to 81 (FTHPFPESR) are lumenal. A helical membrane pass occupies residues 82 to 104 (PVLLFSVLAYFALLGILTLHSSF). The Cytoplasmic segment spans residues 105–199 (REKGTFAVAL…KKNASSLSSN (95 aa)).

This sequence belongs to the SPCS2 family. Component of the signal peptidase complex (SPC) composed of a catalytic subunit twr/SEC11 and three accessory subunits Spase12/SPCS1, Spase25/SPCS2 and Spase22-23/SPCS3. The complex induces a local thinning of the ER membrane which is used to measure the length of the signal peptide (SP) h-region of protein substrates. This ensures the selectivity of the complex towards h-regions shorter than 18-20 amino acids.

The protein localises to the endoplasmic reticulum membrane. In terms of biological role, component of the signal peptidase complex (SPC) which catalyzes the cleavage of N-terminal signal sequences from nascent proteins as they are translocated into the lumen of the endoplasmic reticulum. Enhances the enzymatic activity of SPC and facilitates the interactions between different components of the translocation site. The protein is Signal peptidase complex subunit 2 (Spase25) of Drosophila melanogaster (Fruit fly).